A 193-amino-acid polypeptide reads, in one-letter code: Holliday junction branch migration complex subunit RuvA (193 aa).

Positions 1-64 are domain I; that stretch reads MIGRIAGILL…EDAHLLYGFL (64 aa). A domain II region spans residues 65-139; that stretch reads TPQERTTFRE…GKLGADLGAL (75 aa). The tract at residues 139 to 143 is flexible linker; that stretch reads LAGAA. Residues 144–193 are domain III; it reads SASDHATDILNALLALGYSEKEGLAAIKNVPAGTGVSEGIKLALKALSKA.

This sequence belongs to the RuvA family. In terms of assembly, homotetramer. Forms an RuvA(8)-RuvB(12)-Holliday junction (HJ) complex. HJ DNA is sandwiched between 2 RuvA tetramers; dsDNA enters through RuvA and exits via RuvB. An RuvB hexamer assembles on each DNA strand where it exits the tetramer. Each RuvB hexamer is contacted by two RuvA subunits (via domain III) on 2 adjacent RuvB subunits; this complex drives branch migration. In the full resolvosome a probable DNA-RuvA(4)-RuvB(12)-RuvC(2) complex forms which resolves the HJ.

Its subcellular location is the cytoplasm. Its function is as follows. The RuvA-RuvB-RuvC complex processes Holliday junction (HJ) DNA during genetic recombination and DNA repair, while the RuvA-RuvB complex plays an important role in the rescue of blocked DNA replication forks via replication fork reversal (RFR). RuvA specifically binds to HJ cruciform DNA, conferring on it an open structure. The RuvB hexamer acts as an ATP-dependent pump, pulling dsDNA into and through the RuvAB complex. HJ branch migration allows RuvC to scan DNA until it finds its consensus sequence, where it cleaves and resolves the cruciform DNA. The protein is Holliday junction branch migration complex subunit RuvA of Burkholderia cenocepacia (strain HI2424).